A 2104-amino-acid polypeptide reads, in one-letter code: 5'-3' DNA helicase ZGRF1 (2104 aa).

Residues 335–345 are compositionally biased toward polar residues; that stretch reads SSPIHSSTVDG. Residues 335-359 form a disordered region; that stretch reads SSPIHSSTVDGNDTERKPKAQEDDV. S336 carries the post-translational modification Phosphoserine. Basic and acidic residues predominate over residues 347–356; that stretch reads DTERKPKAQE. Phosphoserine is present on residues S793 and S864. Zn(2+) is bound by residues C1349, H1351, C1374, and C1382. A GRF-type zinc finger spans residues 1349 to 1391; it reads CHHSQPAKLVMVKKEGPNKGRLFYTCDGPKADRCKFFKWLEDV. A disordered region spans residues 2085–2104; the sequence is VEEKQKKKSEKEKSKDKSHS.

In terms of assembly, interacts with DNA repair protein RAD51; the interaction promotes RAD51 strand exchange activity. Also interacts with DNA repair proteins EXO1 and BRCA1; the interactions are increased following DNA damage induction.

The protein resides in the nucleus. It carries out the reaction ATP + H2O = ADP + phosphate + H(+). It catalyses the reaction Couples ATP hydrolysis with the unwinding of duplex DNA at the replication fork by translocating in the 5'-3' direction. This creates two antiparallel DNA single strands (ssDNA). The leading ssDNA polymer is the template for DNA polymerase III holoenzyme which synthesizes a continuous strand.. 5'-3' DNA helicase which is recruited to sites of DNA damage and promotes repair of replication-blocking DNA lesions through stimulation of homologous recombination (HR). Promotes HR by directly stimulating RAD51-mediated strand exchange activity. Not required to load RAD51 at sites of DNA damage but promotes recombinational repair after RAD51 recruitment. Also promotes HR by positively regulating EXO1-mediated DNA end resection of double-strand breaks. Required for recruitment of replication protein RPA2 to DNA damage sites. Promotes the initiation of the G2/M checkpoint but not its maintenance. Catalyzes Holliday junction branch migration and dissociation of D-loops and DNA flaps. The protein is 5'-3' DNA helicase ZGRF1 (ZGRF1) of Homo sapiens (Human).